Consider the following 357-residue polypeptide: Cobalt-precorrin-5B C(1)-methyltransferase (357 aa).

The protein belongs to the CbiD family.

It carries out the reaction Co-precorrin-5B + S-adenosyl-L-methionine = Co-precorrin-6A + S-adenosyl-L-homocysteine. It participates in cofactor biosynthesis; adenosylcobalamin biosynthesis; cob(II)yrinate a,c-diamide from sirohydrochlorin (anaerobic route): step 6/10. Functionally, catalyzes the methylation of C-1 in cobalt-precorrin-5B to form cobalt-precorrin-6A. In Rhodospirillum rubrum (strain ATCC 11170 / ATH 1.1.1 / DSM 467 / LMG 4362 / NCIMB 8255 / S1), this protein is Cobalt-precorrin-5B C(1)-methyltransferase.